Consider the following 504-residue polypeptide: Histidine--tRNA ligase (504 aa).

The protein belongs to the class-II aminoacyl-tRNA synthetase family. Homodimer.

It localises to the cytoplasm. The catalysed reaction is tRNA(His) + L-histidine + ATP = L-histidyl-tRNA(His) + AMP + diphosphate + H(+). The chain is Histidine--tRNA ligase (hisS) from Rhizobium meliloti (strain 1021) (Ensifer meliloti).